A 100-amino-acid chain; its full sequence is Ferredoxin (100 aa).

Residues Met-1 to Phe-8 constitute a propeptide that is removed on maturation. The 2Fe-2S ferredoxin-type domain maps to Gly-9–Leu-100. Positions 46, 52, 55, and 85 each coordinate [2Fe-2S] cluster.

[2Fe-2S] cluster serves as cofactor.

The protein resides in the hydrogenosome. In terms of biological role, ferredoxins are iron-sulfur proteins that transfer electrons in a wide variety of metabolic reactions. It links pyruvate:ferredoxin oxidoreductase to hydrogenase. In Trichomonas vaginalis, this protein is Ferredoxin.